A 380-amino-acid chain; its full sequence is Alpha-N-acetylneuraminate alpha-2,8-sialyltransferase ST8SIA3 (380 aa).

The Cytoplasmic segment spans residues 1–9 (MRNCKMARV). A helical; Signal-anchor for type II membrane protein membrane pass occupies residues 10–33 (ASVLGLVMLSVALLNLSLISYVSL). Residues 34–380 (KKENIFATPK…LTKLTLSHCA (347 aa)) are Lumenal-facing. N-linked (GlcNAc...) asparagine glycosylation is found at N93 and N113. Disulfide bonds link C162–C313 and C176–C379. CMP-N-acetyl-beta-neuraminate-binding residues include N167 and N190. N206 carries N-linked (GlcNAc...) asparagine glycosylation. 6 residues coordinate CMP-N-acetyl-beta-neuraminate: S300, T301, G302, W322, Y336, and H337. H354 (proton donor/acceptor) is an active-site residue.

It belongs to the glycosyltransferase 29 family. In terms of assembly, homodimer. In terms of processing, autopolysialylated.

The protein resides in the golgi apparatus membrane. The catalysed reaction is [N-acetyl-alpha-D-neuraminosyl-(2-&gt;8)](n) + CMP-N-acetyl-beta-neuraminate = [N-acetyl-alpha-D-neuraminosyl-(2-&gt;8)](n+1) + CMP + H(+). The enzyme catalyses alpha-Neu5Ac-(2-&gt;3)-beta-D-Gal-(1-&gt;4)-6S-D-GlcNAc + CMP-N-acetyl-beta-neuraminate = alpha-Neu5Ac-(2-&gt;8)-alpha-Neu5Ac-(2-&gt;3)-beta-D-Gal-(1-&gt;4)-6S-D-GlcNAc + CMP + H(+). It catalyses the reaction a ganglioside GM3 (d18:1(4E)) + CMP-N-acetyl-beta-neuraminate = a ganglioside GD3 (d18:1(4E)) + CMP + H(+). It carries out the reaction a ganglioside GM3 + CMP-N-acetyl-beta-neuraminate = a ganglioside GD3 + CMP + H(+). The catalysed reaction is an N-acetyl-alpha-neuraminyl-(2-&gt;3)-beta-D-galactosyl derivative + CMP-N-acetyl-beta-neuraminate = an N-acetyl-alpha-neuraminyl-(2-&gt;8)-N-acetyl-alpha-neuraminyl-(2-&gt;3)-beta-D-galactosyl derivative + CMP + H(+). The enzyme catalyses an N-acetyl-alpha-neuraminyl-(2-&gt;3)-beta-D-galactosyl-(1-&gt;4)-N-acetyl-beta-D-glucosaminyl derivative + CMP-N-acetyl-beta-neuraminate = an alpha-Neu5Ac-(2-&gt;8)-alpha-Neu5Ac-(2-&gt;3)-beta-D-Gal-(1-&gt;4)-beta-D-GlcNAc derivative + CMP + H(+). The protein operates within protein modification; protein glycosylation. Functionally, catalyzes the transfer of sialic acid from a CMP-linked sialic acid donor onto a terminal alpha-2,3-, alpha-2,6-, or alpha-2,8-linked sialic acid of an acceptor, such as N-linked oligosaccharides of glycoproteins and glycolipids through alpha-2,8-linkages. Forms oligosialic and polysialic acid on various sialylated N-acetyllactosamine oligosaccharides of glycoproteins, including FETUB N-glycans, a2-HS-glycoprotein (AHSG) and alpha 2,3-sialylated glycosphingolipids, such as alpha 2,3-sialylparagloboside and ganglioside GM3 and to a lesser extent NCAM1 N-glycans. However, it is much more specific to N-linked oligosaccharides of glycoproteins than glycosphingolipids. 2,3-sialylparagloboside serves as the best acceptor substrate among the glycolipids. alpha-Neu5Ac-(2-&gt;8)-alpha-Neu5Ac-(2-&gt;3)-beta-D-Gal-(1-&gt;4)-6S-D-GlcNAc and monosialyl and disialyl N-acetyllactosamines are the best acceptor substrates among glycoproteins. May plays critical role in the striatum by mediating the formation of disialylated and trisialylated terminal glycotopes on N- and O-glycans of specific striatal proteins, regulating their distribution in lipid rafts, affecting their interaction with other binding partners, and subsequently modulating striatal functions. This is Alpha-N-acetylneuraminate alpha-2,8-sialyltransferase ST8SIA3 from Pan troglodytes (Chimpanzee).